Here is a 745-residue protein sequence, read N- to C-terminus: DEAD-box ATP-dependent RNA helicase 3A, chloroplastic (745 aa).

The transit peptide at 1–41 (MASLVTLPAIAFSNPATASGAVRLRAAAFRCWALRRRGWAV) directs the protein to the chloroplast. Positions 88–116 (LAIARLGLPDELVATLEKRGITHLFPIQR) match the Q motif motif. Residues 119 to 295 (LIPALGGRDL…RRYLNNPLTI (177 aa)) enclose the Helicase ATP-binding domain. An ATP-binding site is contributed by 132-139 (AKTGTGKT). The DEAD box motif lies at 243–246 (DEAD). In terms of domain architecture, Helicase C-terminal spans 324–469 (ILSDLITVYA…ISPPSIEEVL (146 aa)). The segment at 606–724 (LTKISKLPAL…SLGGRESSRS (119 aa)) is disordered. Residues 641-650 (GGGASRGRGG) show a composition bias toward gly residues. Over residues 656–670 (EDRYRRGGRSLRSDN) the composition is skewed to basic and acidic residues. Positions 687–724 (RSSSSFGGRSSSYGSRGSPSPSFGVRSSSLGGRESSRS) are enriched in low complexity. The segment at 727-744 (GACFNCGESGHRASDCPN) adopts a CCHC-type zinc-finger fold.

This sequence belongs to the DEAD box helicase family. DDX21/DDX50 subfamily.

Its subcellular location is the plastid. It is found in the chloroplast. It catalyses the reaction ATP + H2O = ADP + phosphate + H(+). In terms of biological role, nuclear genome-encoded factor involved in ribosome biogenesis in chloroplasts. Binds specific group II introns in chloroplasts and facilitates their splicing. Required for normal development of chloroplasts. This Zea mays (Maize) protein is DEAD-box ATP-dependent RNA helicase 3A, chloroplastic.